The following is a 930-amino-acid chain: Carnosine synthase 1 (930 aa).

The disordered stretch occupies residues 1–24 (MISVDRLSEEQALGMKEQEWAGPE). Positions 624–825 (RPPPAAFSVP…LLLAAVLLAL (202 aa)) constitute an ATP-grasp domain. 650–716 (VPFPAVAKLE…MEYVPGTEHD (67 aa)) contacts ATP. Glu782, Glu794, and Asn796 together coordinate Mg(2+). Positions 782, 794, and 796 each coordinate Mn(2+).

Homotetramer. The cofactor is Mg(2+). Requires Mn(2+) as cofactor.

It carries out the reaction beta-alanine + L-histidine + ATP = carnosine + ADP + phosphate + H(+). The catalysed reaction is 4-aminobutanoate + L-histidine + ATP = L-homocarnosine + ADP + phosphate + H(+). Its function is as follows. Catalyzes the synthesis of carnosine and homocarnosine. Carnosine is synthesized more efficiently than homocarnosine. This is Carnosine synthase 1 from Gallus gallus (Chicken).